The sequence spans 597 residues: MKIEDKLVTSVISGLKALYGQDVPAAQVQLQKTKKEFEGHLTLVVFPFLKMSKKGPEQTAQEIGEYLKANEPAVAAFNVIKGFLNLTVASATWIELLNEIHADAQYGIVSADENAPLVMIEYSSPNTNKPLHLGHVRNNLLGNALANIVMANGNKVVKTNIVNDRGIHICKSMLAWQKYGKGETPESSGKKGDHLVGDYYVAFDKHYKAEVAELMEKGMSKEEAEAASPLMNEAREMLVKWEAGDPEVRALWQMMNNWVYTGFDETYRKMGVGFDKIYYESNTYLEGKEKVMEGLEKGFFFKKEDGSVWADLTAEGLDHKLLLRGDGTSVYMTQDIGTAKLRFADYPIDKMIYVVGNEQNYHFQVLSILLDKLGFEWGKSLVHFSYGMVELPEGKMKSREGTVVDADDLMAEMIATAKETSQELGKLDGLTQEEADDIARIVGLGALKYFILKVDARKNMTFNPKESIDFNGNTGPFIQYTYARIRSVLRKAAEAGIVIPEVLPANIELSEKEEGLIQMVADFAAVVRQAGEDYSPSGIANYVYDLVKEYNQFYHDFSILREENEDVKLFRIALSANIAKVVRLGMGLLGIEVPDRM.

Positions 125–135 (PNTNKPLHLGH) match the 'HIGH' region motif.

This sequence belongs to the class-I aminoacyl-tRNA synthetase family. As to quaternary structure, monomer.

It localises to the cytoplasm. The enzyme catalyses tRNA(Arg) + L-arginine + ATP = L-arginyl-tRNA(Arg) + AMP + diphosphate. This Bacteroides fragilis (strain YCH46) protein is Arginine--tRNA ligase.